The chain runs to 583 residues: CD166 antigen (583 aa).

A signal peptide spans 1 to 27; the sequence is MASKGSPSCRLVFCLLISAAVLRPGLG. Ig-like V-type domains follow at residues 28–120 and 125–234; these read WYTV…TEDN and PTLV…KTIY. At 28–527 the chain is on the extracellular side; that stretch reads WYTVNSAYGD…NREKVNDQAK (500 aa). 2 disulfides stabilise this stretch: Cys-43-Cys-113 and Cys-157-Cys-220. Asn-95, Asn-167, Asn-265, Asn-306, Asn-361, Asn-457, Asn-480, and Asn-499 each carry an N-linked (GlcNAc...) asparagine glycan. Ig-like C2-type domains follow at residues 245-328, 333-409, and 416-501; these read PTEQ…TTIT, DLSL…ESLT, and PQIK…LNVS. Intrachain disulfides connect Cys-270/Cys-313, Cys-354/Cys-392, and Cys-435/Cys-485. The helical transmembrane segment at 528 to 549 threads the bilayer; that stretch reads LIVGIVVGLLLAALVAGVVYWL. Residues 550 to 583 are Cytoplasmic-facing; sequence YMKKSKTASKHVNKDLGNMEENKKLEENNHKTEA. The disordered stretch occupies residues 562 to 583; sequence NKDLGNMEENKKLEENNHKTEA. Over residues 569–583 the composition is skewed to basic and acidic residues; that stretch reads EENKKLEENNHKTEA.

As to quaternary structure, homodimer. Interacts (via extracellular domain) with CD6 (via extracellular domain). Homodimerization and interaction with CD6 involve the same region and cannot occur simultaneously. The affinity for CD6 is much higher than the affinity for self-association. Interacts (via glycosylated extracellular domain) with LGALS1 and LGALS3. Interaction with LGALS1 or LGALS3 inhibits interaction with CD6. Post-translationally, the N-terminus is blocked. Glycosylated. In terms of tissue distribution, strongest expression in the lung, then brain, liver, and kidney. Present in the somatosensory system, basal ganglia, cortex, olfactory system, and circumventricular organs.

It localises to the cell membrane. The protein localises to the cell projection. The protein resides in the axon. Its subcellular location is the dendrite. In terms of biological role, cell adhesion molecule that mediates both heterotypic cell-cell contacts via its interaction with CD6, as well as homotypic cell-cell contacts. Promotes T-cell activation and proliferation via its interactions with CD6. Contributes to the formation and maturation of the immunological synapse via its interactions with CD6. Mediates homotypic interactions with cells that express ALCAM. Mediates attachment of dendritic cells onto endothelial cells via homotypic interaction. Inhibits endothelial cell migration and promotes endothelial tube formation via homotypic interactions. Required for normal organization of the lymph vessel network. Required for normal hematopoietic stem cell engraftment in the bone marrow. Plays a role in hematopoiesis; required for normal numbers of hematopoietic stem cells in bone marrow. Promotes in vitro osteoblast proliferation and differentiation. Promotes neurite extension, axon growth and axon guidance; axons grow preferentially on surfaces that contain ALCAM. Mediates outgrowth and pathfinding for retinal ganglion cell axons. The polypeptide is CD166 antigen (Alcam) (Rattus norvegicus (Rat)).